Consider the following 79-residue polypeptide: Schistosomin (79 aa).

Post-translationally, contains four disulfide bonds. In terms of tissue distribution, growth-controlling neurosecretory light green cells, in the cerebral ganglia of the CNS.

Its subcellular location is the secreted. Its function is as follows. Anti-gonadotropic neuropeptide. It also decreases the binding capacity of calfluxin to membrane-bound receptors of the albumen gland. This leads to inhibition of the reproductive activities of the infected snail. The sequence is that of Schistosomin from Lymnaea stagnalis (Great pond snail).